Here is a 300-residue protein sequence, read N- to C-terminus: MAAAAEVSLLQECGCKGIRTCLICERQRHRDPPWQICLQKKCCFLYCPDTGWAAGAEGSDLEGWAFPFPGVTLIQDFVTPEEEAEMVRLMDCDPWKLSQSGRKKQDYGPKVNFRKQKLKMAGFQGLPGFSQKVVQRMGLYPGLEDFQPVEQCNLDYSPERGSAIDPHLDDAWLWGERLVSLNLLSATVVSMSPEAPGSLLLCSAPSVRPDAFEDSLVAPSRSVPCQEVEVAITVPRRSLLVLTGAARHQWTHAIHRRHIKARRVCATFRELSSEFLPGGKQQELGQELLQAALSFQGRPV.

An N-acetylalanine modification is found at A2. Residues 148–272 (PVEQCNLDYS…RVCATFRELS (125 aa)) enclose the Fe2OG dioxygenase domain. Residues H167, D169, and H252 each contribute to the Fe cation site. R263 lines the 2-oxoglutarate pocket.

It belongs to the alkB family. Interacts with ZFHX3, MLLT3, MLLT1, HSF4, EP300, TES, EIF3C, MTMR6 and PSMA6. It depends on Fe(2+) as a cofactor.

It is found in the cytoplasm. The protein localises to the nucleus. It localises to the nucleolus. Its subcellular location is the midbody. It catalyses the reaction an N(6)-methyl-2'-deoxyadenosine in DNA + 2-oxoglutarate + O2 = a 2'-deoxyadenosine in DNA + formaldehyde + succinate + CO2. The catalysed reaction is N(6)-methyl-L-lysyl-[protein] + 2-oxoglutarate + O2 = L-lysyl-[protein] + formaldehyde + succinate + CO2. Functionally, dioxygenase that mediates demethylation of actin monomethylated at 'Lys-84' (K84me1), thereby acting as a regulator of actomyosin-processes. Demethylation of actin K84me1 is required for maintaining actomyosin dynamics supporting normal cleavage furrow ingression during cytokinesis and cell migration. In addition to proteins, also demethylates DNA: specifically demethylates DNA methylated on the 6th position of adenine (N(6)-methyladenosine) DNA, thereby regulating Polycomb silencing. This Mus musculus (Mouse) protein is Alpha-ketoglutarate-dependent dioxygenase alkB homolog 4.